The following is a 415-amino-acid chain: Adenosylhomocysteinase (415 aa).

The substrate site is built by T53, D124, and E147. Position 148 to 150 (148 to 150 (TTT)) interacts with NAD(+). Substrate contacts are provided by K177 and D181. NAD(+) is bound by residues N182, 211–216 (GYGWVG), E234, N269, 290–292 (SGH), and N337.

Belongs to the adenosylhomocysteinase family. NAD(+) serves as cofactor.

The protein resides in the cytoplasm. It carries out the reaction S-adenosyl-L-homocysteine + H2O = L-homocysteine + adenosine. It functions in the pathway amino-acid biosynthesis; L-homocysteine biosynthesis; L-homocysteine from S-adenosyl-L-homocysteine: step 1/1. Functionally, may play a key role in the regulation of the intracellular concentration of adenosylhomocysteine. The sequence is that of Adenosylhomocysteinase from Sulfolobus acidocaldarius (strain ATCC 33909 / DSM 639 / JCM 8929 / NBRC 15157 / NCIMB 11770).